The chain runs to 218 residues: MQTEQPPKESQTENTVSEPQEKALRTVFDDKINFNLKHPLARPWTLWFLMPPTPGLEWNELQKNIITFNSVEEFWGIHNNINPASSLPIKSDYSFFREGVRPEWEDVHNKTGGKWAFQNKGRGGNALDEMWLTTVLAAIGETLDPTGQEVMGVVINMRKGFYRLAVWTKSCNNREVLMEIGTRFKQVLNLPRSETIEFSAHEDSSKSGSTRAKTRMSV.

Residues Met1–Gln11 show a composition bias toward basic and acidic residues. Disordered stretches follow at residues Met1–Gln20 and Phe198–Val218. A compositionally biased stretch (polar residues) spans Lys206–Val218.

Belongs to the eukaryotic initiation factor 4E family. In terms of assembly, eIF4F is a multi-subunit complex, the composition of which varies with external and internal environmental conditions. It is composed of at least eIF4A, eIF4E and eIF4G. eIF4E is also known to interact with other partners.

Its function is as follows. Recognizes and binds the 7-methylguanosine-containing mRNA cap during an early step in the initiation of protein synthesis and facilitates ribosome binding by inducing the unwinding of the mRNAs secondary structures. This chain is Eukaryotic translation initiation factor 4E-1 (tif451), found in Schizosaccharomyces pombe (strain 972 / ATCC 24843) (Fission yeast).